The following is an 86-amino-acid chain: Large ribosomal subunit protein bL27c (86 aa).

Residues 1-20 are disordered; it reads MAHKKGSGSTRNGRDSNAQR. Positions 7–19 are enriched in polar residues; it reads SGSTRNGRDSNAQ.

This sequence belongs to the bacterial ribosomal protein bL27 family.

It is found in the plastid. It localises to the chloroplast. In Guillardia theta (Cryptophyte), this protein is Large ribosomal subunit protein bL27c (rpl27).